A 262-amino-acid chain; its full sequence is ELL-associated factor 2 (262 aa).

The interval 17 to 104 is necessary for interaction with ELL; sequence LKLGESFEKQ…TGECRLEKLS (88 aa). Residues 124–144 show a composition bias toward polar residues; sequence LEQQQQQMWNPPRTSNLVQHS. Disordered stretches follow at residues 124–154 and 170–232; these read LEQQ…SPTS and MDQM…ADTT. A phosphoserine mark is found at Ser146, Ser151, and Ser154. Residues 174–192 are compositionally biased toward low complexity; sequence SSCDSSSDSRSSSSSSSED. The tract at residues 177–262 is necessary for transactivation activity; that stretch reads DSSSDSRSSS…LSESDSDSED (86 aa). The interval 248–262 is necessary for interaction with TCEA1 and transactivation activity; it reads RSDLQLSESDSDSED.

Belongs to the EAF family. Component of the super elongation complex (SEC), at least composed of EAF1, EAF2, CDK9, MLLT3/AF9, AFF (AFF1 or AFF4), the P-TEFb complex and ELL (ELL, ELL2 or ELL3). Interacts with ELL, ELL2 and TCEA1.

It localises to the nucleus speckle. In terms of biological role, acts as a transcriptional transactivator of ELL, ELL2 and TCEA1 elongation activities. Potent inducer of apoptosis in prostatic and non-prostatic cell lines. This Rattus norvegicus (Rat) protein is ELL-associated factor 2 (Eaf2).